The following is a 368-amino-acid chain: Phospho-N-acetylmuramoyl-pentapeptide-transferase (368 aa).

The next 10 membrane-spanning stretches (helical) occupy residues 32 to 52 (TGGA…WIID), 79 to 99 (TPTM…VLWA), 102 to 122 (LNPY…IGFY), 140 to 160 (TRLL…IRLG), 176 to 196 (VVVD…VGAG), 207 to 227 (GLAI…AYLA), 247 to 267 (LAVL…FNAP), 271 to 291 (IFMG…IAVA), 296 to 316 (IVLA…IVQV), and 345 to 365 (QIVI…LSTL).

Belongs to the glycosyltransferase 4 family. MraY subfamily. Requires Mg(2+) as cofactor.

It localises to the cell inner membrane. The catalysed reaction is UDP-N-acetyl-alpha-D-muramoyl-L-alanyl-gamma-D-glutamyl-meso-2,6-diaminopimeloyl-D-alanyl-D-alanine + di-trans,octa-cis-undecaprenyl phosphate = di-trans,octa-cis-undecaprenyl diphospho-N-acetyl-alpha-D-muramoyl-L-alanyl-D-glutamyl-meso-2,6-diaminopimeloyl-D-alanyl-D-alanine + UMP. It functions in the pathway cell wall biogenesis; peptidoglycan biosynthesis. Functionally, catalyzes the initial step of the lipid cycle reactions in the biosynthesis of the cell wall peptidoglycan: transfers peptidoglycan precursor phospho-MurNAc-pentapeptide from UDP-MurNAc-pentapeptide onto the lipid carrier undecaprenyl phosphate, yielding undecaprenyl-pyrophosphoryl-MurNAc-pentapeptide, known as lipid I. The chain is Phospho-N-acetylmuramoyl-pentapeptide-transferase from Nitrobacter hamburgensis (strain DSM 10229 / NCIMB 13809 / X14).